The following is a 152-amino-acid chain: Large ribosomal subunit protein bL9 (152 aa).

This sequence belongs to the bacterial ribosomal protein bL9 family.

In terms of biological role, binds to the 23S rRNA. The polypeptide is Large ribosomal subunit protein bL9 (Prochlorococcus marinus (strain MIT 9211)).